A 189-amino-acid chain; its full sequence is Peptidyl-tRNA hydrolase (189 aa).

Residue tyrosine 14 participates in tRNA binding. Histidine 19 serves as the catalytic Proton acceptor. The tRNA site is built by tyrosine 64, asparagine 66, and asparagine 112.

This sequence belongs to the PTH family. Monomer.

It localises to the cytoplasm. The enzyme catalyses an N-acyl-L-alpha-aminoacyl-tRNA + H2O = an N-acyl-L-amino acid + a tRNA + H(+). Functionally, hydrolyzes ribosome-free peptidyl-tRNAs (with 1 or more amino acids incorporated), which drop off the ribosome during protein synthesis, or as a result of ribosome stalling. Catalyzes the release of premature peptidyl moieties from peptidyl-tRNA molecules trapped in stalled 50S ribosomal subunits, and thus maintains levels of free tRNAs and 50S ribosomes. The sequence is that of Peptidyl-tRNA hydrolase from Finegoldia magna (strain ATCC 29328 / DSM 20472 / WAL 2508) (Peptostreptococcus magnus).